The sequence spans 132 residues: Interleukin-5 (132 aa).

Residues 1–17 (MRLPLQLSILTLAWVWA) form the signal peptide. Residues asparagine 45, asparagine 74, and asparagine 88 are each glycosylated (N-linked (GlcNAc...) asparagine).

Belongs to the IL-5 family. In terms of assembly, homodimer; disulfide-linked. Interacts with IL5RA. Interacts with CSF2RB.

The protein localises to the secreted. Functionally, homodimeric cytokine expressed predominantly by T-lymphocytes and NK cells that plays an important role in the survival, differentiation, and chemotaxis of eosinophils. Also acts on activated and resting B-cells to induce immunoglobulin production, growth, and differentiation. Mechanistically, exerts its biological effects through a receptor composed of IL5RA subunit and the cytokine receptor common subunit beta/CSF2RB. Binding to the receptor leads to activation of various kinases including LYN, SYK and JAK2 and thereby propagates signals through the RAS-MAPK and JAK-STAT5 pathways respectively. The polypeptide is Interleukin-5 (IL5) (Meriones unguiculatus (Mongolian jird)).